The primary structure comprises 557 residues: Dihydroxy-acid dehydratase (557 aa).

Asp-78 contacts Mg(2+). Cys-119 is a [2Fe-2S] cluster binding site. Asp-120 and Lys-121 together coordinate Mg(2+). Lys-121 is subject to N6-carboxylysine. Cys-192 contacts [2Fe-2S] cluster. Glu-442 contributes to the Mg(2+) binding site. Ser-468 serves as the catalytic Proton acceptor.

Belongs to the IlvD/Edd family. In terms of assembly, homodimer. [2Fe-2S] cluster serves as cofactor. It depends on Mg(2+) as a cofactor.

It catalyses the reaction (2R)-2,3-dihydroxy-3-methylbutanoate = 3-methyl-2-oxobutanoate + H2O. It carries out the reaction (2R,3R)-2,3-dihydroxy-3-methylpentanoate = (S)-3-methyl-2-oxopentanoate + H2O. It functions in the pathway amino-acid biosynthesis; L-isoleucine biosynthesis; L-isoleucine from 2-oxobutanoate: step 3/4. Its pathway is amino-acid biosynthesis; L-valine biosynthesis; L-valine from pyruvate: step 3/4. Functionally, functions in the biosynthesis of branched-chain amino acids. Catalyzes the dehydration of (2R,3R)-2,3-dihydroxy-3-methylpentanoate (2,3-dihydroxy-3-methylvalerate) into 2-oxo-3-methylpentanoate (2-oxo-3-methylvalerate) and of (2R)-2,3-dihydroxy-3-methylbutanoate (2,3-dihydroxyisovalerate) into 2-oxo-3-methylbutanoate (2-oxoisovalerate), the penultimate precursor to L-isoleucine and L-valine, respectively. The protein is Dihydroxy-acid dehydratase of Bacillus anthracis (strain A0248).